A 390-amino-acid polypeptide reads, in one-letter code: MKKIALTALAVFSLAASAAYADVVKVGVIGPFSGPFALQGKNFKAGIDAYMAEHGNKVGDDTVEVVYRDVPQADPAQSKALAQELVVKEGVQYLAGFYFTPDAMAVTPILKQGNVPMVVMNAATSSIVTKSPYVVRTSFTTWQTSTPIARVALDKGVKKVISVVSDYGPGVDAENAFKAAFTDAGGEVVEAIRMPLATNDFSPIMQRIKDSGAQGVFAFLPSGPTTLGFMKAYVDNGLKSSGIQLFAPGDLTQESDLPALGENALGVLTTFHYAVSHDSPENRKFVEEARKAIGNPAELSFPSVGAYDGMHVIYKMIEATGGKKDAAKAVEAVKGMEWVSPRGPVSIDPESRHITQNIYLREVAKADDGTYYNKEIQTFEKQGDPGLKAQ.

Residues 1 to 21 (MKKIALTALAVFSLAASAAYA) form the signal peptide.

It belongs to the leucine-binding protein family.

In terms of biological role, component of an amino-acid transport system. This is Leu/Ile/Val-binding protein homolog 6 from Brucella melitensis biotype 1 (strain ATCC 23456 / CCUG 17765 / NCTC 10094 / 16M).